A 530-amino-acid chain; its full sequence is UDP-glucuronosyltransferase 1A8 (530 aa).

Positions 1 to 25 (MARTGWTSPIPLCVSLLLTCGFAEA) are cleaved as a signal peptide. 3 N-linked (GlcNAc...) asparagine glycosylation sites follow: asparagine 71, asparagine 292, and asparagine 344. The helical transmembrane segment at 488 to 504 (VIGFLLAVVLTVAFITF) threads the bilayer.

The protein belongs to the UDP-glycosyltransferase family. Homodimer. Homooligomer. Interacts with UGT1A1, UGT1A3, UGT1A4, UGT1A6, UGT1A7, UGT1A9 and UGT1A10 to form heterodimers. Isoform 1 interacts with isoform 2/i2 suggesting that oligomerization is involved in negative regulation of transferase activity by isoform 2. Isoform 1 also interacts with respective i2 isoforms of UGT1A1, UGT1A3, UGT1A4, UGT1A6, UGT1A7, UGT1A9 and UGT1A10. Expressed in kidney, colon and small intestine. Not expressed in liver. As to expression, expressed in liver, kidney, colon and small intestine.

The protein resides in the endoplasmic reticulum membrane. It carries out the reaction glucuronate acceptor + UDP-alpha-D-glucuronate = acceptor beta-D-glucuronoside + UDP + H(+). It catalyses the reaction 17beta-estradiol + UDP-alpha-D-glucuronate = 17beta-estradiol 3-O-(beta-D-glucuronate) + UDP + H(+). The enzyme catalyses 17alpha-estradiol + UDP-alpha-D-glucuronate = 17alpha-estradiol 3-O-(beta-D-glucuronate) + UDP + H(+). The catalysed reaction is estrone + UDP-alpha-D-glucuronate = estrone 3-O-(beta-D-glucuronate) + UDP + H(+). It carries out the reaction 16alpha,17alpha-estriol + UDP-alpha-D-glucuronate = 16alpha,17alpha-estriol 3-O-(beta-D-glucuronate) + UDP + H(+). It catalyses the reaction 2-hydroxy-17beta-estradiol + UDP-alpha-D-glucuronate = 2-hydroxy-17beta-estradiol 3-O-(beta-D-glucuronate) + UDP + H(+). The enzyme catalyses 2-hydroxy-17beta-estradiol + UDP-alpha-D-glucuronate = 17beta-estradiol 2-O-(beta-D-glucuronate) + UDP + H(+). The catalysed reaction is 2-hydroxyestrone + UDP-alpha-D-glucuronate = 2-hydroxyestrone 3-O-(beta-D-glucuronate) + UDP + H(+). It carries out the reaction 4-hydroxy-17beta-estradiol + UDP-alpha-D-glucuronate = 4-hydroxy-17beta-estradiol 3-O-(beta-D-glucuronate) + UDP + H(+). It catalyses the reaction 4-hydroxy-17beta-estradiol + UDP-alpha-D-glucuronate = 17beta-estradiol 4-O-(beta-D-glucuronate) + UDP + H(+). The enzyme catalyses 4-hydroxyestrone + UDP-alpha-D-glucuronate = 4-hydroxyestrone 3-O-(beta-D-glucuronate) + UDP + H(+). The catalysed reaction is 4-hydroxyestrone + UDP-alpha-D-glucuronate = estrone 4-O-(beta-D-glucuronate) + UDP + H(+). It carries out the reaction 2-methoxy-17beta-estradiol + UDP-alpha-D-glucuronate = 2-methoxy-17beta-estradiol 3-O-(beta-D-glucuronate) + UDP + H(+). It catalyses the reaction 2-methoxyestrone + UDP-alpha-D-glucuronate = 2-methoxyestrone 3-O-(beta-D-glucuronate) + UDP + H(+). The enzyme catalyses 4-methoxy-17beta-estradiol + UDP-alpha-D-glucuronate = 4-methoxy-17beta-estradiol 3-O-(beta-D-glucuronate) + UDP + H(+). The catalysed reaction is 4-methoxyestrone + UDP-alpha-D-glucuronate = 4-methoxyestrone 3-O-(beta-D-glucuronate) + UDP + H(+). It carries out the reaction 17beta-hydroxy-5alpha-androstan-3-one + UDP-alpha-D-glucuronate = 5alpha-dihydrotestosterone 17-O-(beta-D-glucuronate) + UDP + H(+). It catalyses the reaction 5alpha-dihydrotestosterone 17-O-(beta-D-glucuronate) + UDP-alpha-D-glucuronate = 5alpha-dihydrotestosterone 17-O-[beta-D-glucuronosyl-(1-&gt;2)-glucuronate] + UDP + H(+). The enzyme catalyses prunetin + UDP-alpha-D-glucuronate = prunetin-4'-O-beta-D-glucuronide + UDP. The catalysed reaction is prunetin + UDP-alpha-D-glucuronate = prunetin-5-O-beta-D-glucuronide + UDP. It carries out the reaction candesartan + UDP-alpha-D-glucuronate = candesartan O-beta-D-glucuronoside + UDP. It catalyses the reaction mycophenolate + UDP-alpha-D-glucuronate = mycophenolate 7-O-beta-D-glucuronide + UDP + H(+). The enzyme catalyses (E)-ferulate + UDP-alpha-D-glucuronate = (E)-4-O-(beta-D-glucuronosyl)-ferulate + UDP + H(+). The catalysed reaction is (E)-ferulate + UDP-alpha-D-glucuronate = (E)-ferulic acid beta-D-glucuronate ester + UDP. Functionally, UDP-glucuronosyltransferase (UGT) that catalyzes phase II biotransformation reactions in which lipophilic substrates are conjugated with glucuronic acid to increase the metabolite's water solubility, thereby facilitating excretion into either the urine or bile. Essential for the elimination and detoxification of drugs, xenobiotics and endogenous compounds. Catalyzes the glucuronidation of endogenous steroid hormones such as androgens and estrogens. Produces dihydrotestosterone (DHT) diglucuronide from the DHT after two subsequent glucoronidation steps. Involved in the glucuronidation of the phytochemical ferulic acid at the phenolic or the carboxylic acid group. Also catalyzes the glucuronidation of the isoflavones genistein, daidzein, glycitein, formononetin, biochanin A and prunetin, which are phytoestrogens with anticancer and cardiovascular properties. Involved in the glucuronidation of the AGTR1 angiotensin receptor antagonist caderastan, a drug which can inhibit the effect of angiotensin II. Also metabolizes mycophenolate, an immunosuppressive agent. Its function is as follows. Lacks UGT glucuronidation activity but acts as a negative regulator of isoform 1. In Homo sapiens (Human), this protein is UDP-glucuronosyltransferase 1A8.